The sequence spans 210 residues: Inner membrane-spanning protein YciB (210 aa).

A run of 6 helical transmembrane segments spans residues 19 to 39 (LVLE…GDWL), 53 to 73 (IFIA…VSWI), 78 to 98 (LPMM…LTLW), 115 to 135 (LFGA…GYVF), 148 to 168 (KLTI…EIVW), and 175 to 195 (FWVA…TLAQ).

It belongs to the YciB family.

It is found in the cell inner membrane. Plays a role in cell envelope biogenesis, maintenance of cell envelope integrity and membrane homeostasis. The sequence is that of Inner membrane-spanning protein YciB from Sinorhizobium fredii (strain NBRC 101917 / NGR234).